Reading from the N-terminus, the 137-residue chain is Nucleoside diphosphate kinase (137 aa).

ATP contacts are provided by lysine 9, phenylalanine 57, arginine 85, threonine 91, arginine 102, and asparagine 112. The active-site Pros-phosphohistidine intermediate is the histidine 115.

Belongs to the NDK family. In terms of assembly, homotetramer. Requires Mg(2+) as cofactor.

The protein localises to the cytoplasm. The catalysed reaction is a 2'-deoxyribonucleoside 5'-diphosphate + ATP = a 2'-deoxyribonucleoside 5'-triphosphate + ADP. It carries out the reaction a ribonucleoside 5'-diphosphate + ATP = a ribonucleoside 5'-triphosphate + ADP. Its function is as follows. Major role in the synthesis of nucleoside triphosphates other than ATP. The ATP gamma phosphate is transferred to the NDP beta phosphate via a ping-pong mechanism, using a phosphorylated active-site intermediate. This chain is Nucleoside diphosphate kinase, found in Leptospira borgpetersenii serovar Hardjo-bovis (strain L550).